The chain runs to 460 residues: Citrate synthase, peroxisomal (460 aa).

Phosphoserine is present on Ser-21. Glycyl lysine isopeptide (Lys-Gly) (interchain with G-Cter in ubiquitin) cross-links involve residues Lys-218 and Lys-239. Active-site residues include His-293 and His-339. Glycyl lysine isopeptide (Lys-Gly) (interchain with G-Cter in ubiquitin) cross-links involve residues Lys-354 and Lys-385. Asp-394 is a catalytic residue. The C-terminal peroxisome targeting signal (PTS1) motif lies at 458–460 (SKL).

Belongs to the citrate synthase family. As to quaternary structure, interacts with F-box protein UCC1. Ubiquitinated by the E3 ubiquitin-protein ligase complex SCF(UCC1), which leads to its degradation by the proteasome. Ubiquitination is prevented by oxaloacetate, suggesting the existence of an oxaloacetate-dependent positive feedback loop that stabilizes CIT2.

Its subcellular location is the cytoplasm. The protein localises to the peroxisome. The enzyme catalyses oxaloacetate + acetyl-CoA + H2O = citrate + CoA + H(+). It participates in carbohydrate metabolism; tricarboxylic acid cycle; isocitrate from oxaloacetate: step 1/2. In terms of biological role, peroxisomal citrate synthase involved in the citrate homeostasis. Catalyzes the condensation of acetyl coenzyme A and oxaloacetate to form citrate. Citrate synthase is the rate-limiting enzyme of the tricarboxylic acid (TCA) cycle. The sequence is that of Citrate synthase, peroxisomal from Saccharomyces cerevisiae (strain ATCC 204508 / S288c) (Baker's yeast).